The primary structure comprises 86 residues: Small ribosomal subunit protein uS15 (86 aa).

Residues 1–22 (MSVDTQKVIEDNKRSAQDTGSP) form a disordered region. The span at 7 to 16 (KVIEDNKRSA) shows a compositional bias: basic and acidic residues.

The protein belongs to the universal ribosomal protein uS15 family. In terms of assembly, part of the 30S ribosomal subunit. Forms a bridge to the 50S subunit in the 70S ribosome, contacting the 23S rRNA.

Functionally, one of the primary rRNA binding proteins, it binds directly to 16S rRNA where it helps nucleate assembly of the platform of the 30S subunit by binding and bridging several RNA helices of the 16S rRNA. Forms an intersubunit bridge (bridge B4) with the 23S rRNA of the 50S subunit in the ribosome. This is Small ribosomal subunit protein uS15 from Xanthomonas campestris pv. campestris (strain 8004).